The following is a 293-amino-acid chain: Ribosomal protein L11 methyltransferase (293 aa).

S-adenosyl-L-methionine-binding residues include Thr-145, Gly-166, Asp-188, and Asn-230.

This sequence belongs to the methyltransferase superfamily. PrmA family.

It localises to the cytoplasm. It catalyses the reaction L-lysyl-[protein] + 3 S-adenosyl-L-methionine = N(6),N(6),N(6)-trimethyl-L-lysyl-[protein] + 3 S-adenosyl-L-homocysteine + 3 H(+). In terms of biological role, methylates ribosomal protein L11. The sequence is that of Ribosomal protein L11 methyltransferase from Salmonella heidelberg (strain SL476).